Here is a 122-residue protein sequence, read N- to C-terminus: UPF0102 protein BQ09720 (122 aa).

Belongs to the UPF0102 family.

In Bartonella quintana (strain Toulouse) (Rochalimaea quintana), this protein is UPF0102 protein BQ09720.